Here is a 239-residue protein sequence, read N- to C-terminus: Large ribosomal subunit protein uL1 (239 aa).

This sequence belongs to the universal ribosomal protein uL1 family. As to quaternary structure, part of the 50S ribosomal subunit.

Binds directly to 23S rRNA. The L1 stalk is quite mobile in the ribosome, and is involved in E site tRNA release. In terms of biological role, protein L1 is also a translational repressor protein, it controls the translation of the L11 operon by binding to its mRNA. The protein is Large ribosomal subunit protein uL1 of Rhodococcus erythropolis (strain PR4 / NBRC 100887).